Here is a 319-residue protein sequence, read N- to C-terminus: GATA transcription factor 18 (319 aa).

Over residues 1–15 the composition is skewed to low complexity; that stretch reads MPDAAAAAAAAQDAD. The interval 1–74 is disordered; it reads MPDAAAAAAA…AAPEPVSALL (74 aa). Acidic residues predominate over residues 31 to 60; it reads DNDDDDGDDGTEEDEEEDDDEEGDEEELPP. The Tify domain maps to 74–109; it reads LPGSPNQLTLLFQGEVYVFESVTPEKVQAVLLLLGR. Positions 143-185 constitute a CCT domain; sequence RVASLIRFREKRKERNFDKKIRYAVRKEVALRMQRRKGQFAGR. The GATA-type zinc-finger motif lies at 215 to 242; that stretch reads CQNCGTSEKMTPAMRRGPAGPRTLCNAC. A disordered region spans residues 292–319; it reads ITASHGEVMGDSTPANEAEIGAPKAQSQ.

Belongs to the type IV zinc-finger family. Class C subfamily.

Its subcellular location is the nucleus. Its function is as follows. Transcriptional activator that specifically binds 5'-GATA-3' or 5'-GAT-3' motifs within gene promoters. The sequence is that of GATA transcription factor 18 from Oryza sativa subsp. japonica (Rice).